Here is a 346-residue protein sequence, read N- to C-terminus: c-di-GMP synthase (346 aa).

It belongs to the CD-NTase family.

It catalyses the reaction 2 GTP = 3',3'-c-di-GMP + 2 diphosphate. Cyclic nucleotide synthase (second messenger synthase) of a CBASS antivirus system. CBASS (cyclic oligonucleotide-based antiphage signaling system) provides immunity against bacteriophage. The CD-NTase protein synthesizes cyclic nucleotides in response to infection; these serve as specific second messenger signals. The signals activate a diverse range of effectors, leading to bacterial cell death and thus abortive phage infection. A type I-D(GG) CBASS system. In terms of biological role, cyclic dinucleotide synthase that catalyzes the synthesis of c-di-GMP, has no activity with other NTP substrates. The protein is c-di-GMP synthase of Lachnospiraceae bacterium (strain RUG226).